A 449-amino-acid polypeptide reads, in one-letter code: Clusterin (449 aa).

An N-terminal signal peptide occupies residues 1-22 (MMKTLLLFVGLLLTWESGQVLG). Residues 78–81 (KKKK) carry the Nuclear localization signal motif. N-linked (GlcNAc...) (complex) asparagine glycosylation is present at Asn86. Intrachain disulfides connect Cys102–Cys313, Cys113–Cys305, Cys116–Cys302, Cys121–Cys295, and Cys129–Cys285. Residue Asn103 is glycosylated (N-linked (GlcNAc...) asparagine). Ser133 is subject to Phosphoserine. Asn145, Asn291, and Asn354 each carry an N-linked (GlcNAc...) asparagine glycan. Residue Asn374 is glycosylated (N-linked (GlcNAc...) (complex) asparagine). Position 396 is a phosphoserine (Ser396). The short motif at 443 to 447 (RKKHR) is the Nuclear localization signal element.

This sequence belongs to the clusterin family. Antiparallel disulfide-linked heterodimer of an alpha chain and a beta chain. Self-associates and forms higher oligomers. Interacts with a broad range of misfolded proteins, including APP, APOC2 and LYZ. Slightly acidic pH promotes interaction with misfolded proteins. Forms high-molecular weight oligomers upon interaction with misfolded proteins. Interacts with APOA1, LRP2, CLUAP1 and PON1. Interacts with the complement membrane attack complex. Interacts (via alpha chain) with XRCC6. Interacts with SYVN1, COMMD1, BTRC, CUL1 and with ubiquitin and SCF (SKP1-CUL1-F-box protein) E3 ubiquitin-protein ligase complexes. Interacts (via alpha chain) with BAX in stressed cells, where BAX undergoes a conformation change leading to association with the mitochondrial membrane. Does not interact with BAX in unstressed cells. Found in a complex with LTF, CLU, EPPIN and SEMG1. Interacts (immaturely glycosylated pre-secreted form) with HSPA5; this interaction promotes CLU stability and facilitates stress-induced CLU retrotranslocation from the secretory pathway to the mitochondria, thereby reducing stress-induced apoptosis by stabilizing mitochondrial membrane integrity. Interacts (isoform 4) with BCL2L1; this interaction releases and activates BAX and promotes cell death. Interacts with TGFBR2 and ACVR1. Interacts (secreted form) with STMN3; this interaction may act as an important modulator during neuronal differentiation. Interacts with VLDLR and LRP8. In terms of processing, proteolytically cleaved on its way through the secretory system, probably within the Golgi lumen. Proteolytic cleavage is not necessary for its chaperone activity. All non-secreted forms are not proteolytically cleaved. Chaperone activity of uncleaved forms is dependent on a non-reducing environment. Post-translationally, polyubiquitinated, leading to proteasomal degradation. Under cellular stress, the intracellular level of cleaved form is reduced due to proteasomal degradation. Extensively glycosylated with sulfated N-linked carbohydrates. About 30% of the protein mass is comprised of complex N-linked carbohydrate. Endoplasmic reticulum (ER) stress induces changes in glycosylation status and increases level of hypoglycosylated forms. Core carbohydrates are essential for chaperone activity. Non-secreted forms are hypoglycosylated or unglycosylated. Detected in blood plasma, cerebrospinal fluid, milk, seminal plasma and colon mucosa. Detected in the germinal center of colon lymphoid nodules and in colon parasympathetic ganglia of the Auerbach plexus (at protein level). Ubiquitous. Detected in brain, testis, ovary, liver and pancreas, and at lower levels in kidney, heart, spleen and lung.

The protein localises to the secreted. Its subcellular location is the cytoplasm. The protein resides in the nucleus. It is found in the mitochondrion membrane. It localises to the cytosol. The protein localises to the microsome. Its subcellular location is the endoplasmic reticulum. The protein resides in the mitochondrion. It is found in the perinuclear region. It localises to the cytoplasmic vesicle. The protein localises to the secretory vesicle. Its subcellular location is the chromaffin granule. Its function is as follows. Functions as extracellular chaperone that prevents aggregation of non native proteins. Prevents stress-induced aggregation of blood plasma proteins. Inhibits formation of amyloid fibrils by APP, APOC2, B2M, CALCA, CSN3, SNCA and aggregation-prone LYZ variants (in vitro). Does not require ATP. Maintains partially unfolded proteins in a state appropriate for subsequent refolding by other chaperones, such as HSPA8/HSC70. Does not refold proteins by itself. Binding to cell surface receptors triggers internalization of the chaperone-client complex and subsequent lysosomal or proteasomal degradation. Protects cells against apoptosis and against cytolysis by complement: inhibits assembly of the complement membrane attack complex (MAC) by preventing polymerization of C9 pore component of the MAC complex. Intracellular forms interact with ubiquitin and SCF (SKP1-CUL1-F-box protein) E3 ubiquitin-protein ligase complexes and promote the ubiquitination and subsequent proteasomal degradation of target proteins. Promotes proteasomal degradation of COMMD1 and IKBKB. Modulates NF-kappa-B transcriptional activity. A mitochondrial form suppresses BAX-dependent release of cytochrome c into the cytoplasm and inhibit apoptosis. Plays a role in the regulation of cell proliferation. An intracellular form suppresses stress-induced apoptosis by stabilizing mitochondrial membrane integrity through interaction with HSPA5. Secreted form does not affect caspase or BAX-mediated intrinsic apoptosis and TNF-induced NF-kappa-B-activity. Secreted form act as an important modulator during neuronal differentiation through interaction with STMN3. Plays a role in the clearance of immune complexes that arise during cell injury. In terms of biological role, does not affect caspase or BAX-mediated intrinsic apoptosis and TNF-induced NF-kappa-B-activity. Does not affect caspase or BAX-mediated intrinsic apoptosis and TNF-induced NF-kappa-B-activity. Promotes cell death through interaction with BCL2L1 that releases and activates BAX. The polypeptide is Clusterin (Homo sapiens (Human)).